We begin with the raw amino-acid sequence, 1371 residues long: DNA-directed RNA polymerase subunit beta'' (1371 aa).

Positions 220, 293, 300, and 303 each coordinate Zn(2+).

It belongs to the RNA polymerase beta' chain family. RpoC2 subfamily. As to quaternary structure, in plastids the minimal PEP RNA polymerase catalytic core is composed of four subunits: alpha, beta, beta', and beta''. When a (nuclear-encoded) sigma factor is associated with the core the holoenzyme is formed, which can initiate transcription. Zn(2+) is required as a cofactor.

It localises to the plastid. It is found in the chloroplast. The catalysed reaction is RNA(n) + a ribonucleoside 5'-triphosphate = RNA(n+1) + diphosphate. Its function is as follows. DNA-dependent RNA polymerase catalyzes the transcription of DNA into RNA using the four ribonucleoside triphosphates as substrates. The protein is DNA-directed RNA polymerase subunit beta'' of Lobularia maritima (Sweet alyssum).